The following is a 416-amino-acid chain: Multifunctional CCA protein (416 aa).

Positions 8 and 11 each coordinate ATP. Residues Gly8 and Arg11 each coordinate CTP. The Mg(2+) site is built by Asp21 and Asp23. Residues Arg91, Arg137, and Arg140 each contribute to the ATP site. CTP contacts are provided by Arg91, Arg137, and Arg140. Residues 228 to 329 (TGVHTLMVLA…VKIFDKADFW (102 aa)) form the HD domain.

This sequence belongs to the tRNA nucleotidyltransferase/poly(A) polymerase family. Bacterial CCA-adding enzyme type 1 subfamily. In terms of assembly, monomer. Can also form homodimers and oligomers. The cofactor is Mg(2+). Ni(2+) serves as cofactor.

It catalyses the reaction a tRNA precursor + 2 CTP + ATP = a tRNA with a 3' CCA end + 3 diphosphate. The enzyme catalyses a tRNA with a 3' CCA end + 2 CTP + ATP = a tRNA with a 3' CCACCA end + 3 diphosphate. Catalyzes the addition and repair of the essential 3'-terminal CCA sequence in tRNAs without using a nucleic acid template. Adds these three nucleotides in the order of C, C, and A to the tRNA nucleotide-73, using CTP and ATP as substrates and producing inorganic pyrophosphate. tRNA 3'-terminal CCA addition is required both for tRNA processing and repair. Also involved in tRNA surveillance by mediating tandem CCA addition to generate a CCACCA at the 3' terminus of unstable tRNAs. While stable tRNAs receive only 3'-terminal CCA, unstable tRNAs are marked with CCACCA and rapidly degraded. In Shewanella baltica (strain OS195), this protein is Multifunctional CCA protein.